The following is a 383-amino-acid chain: Chaperone protein DnaJ (383 aa).

The 66-residue stretch at 6 to 71 (DYYEVLGVSK…QKRSQYDQFG (66 aa)) folds into the J domain. The CR-type zinc-finger motif lies at 141-223 (GVEKKVKVKK…CKGEGVEIGE (83 aa)). 8 residues coordinate Zn(2+): cysteine 154, cysteine 157, cysteine 171, cysteine 174, cysteine 197, cysteine 200, cysteine 211, and cysteine 214. 4 CXXCXGXG motif repeats span residues 154-161 (CSKCRGDG), 171-178 (CQTCHGTG), 197-204 (CPTCHGEG), and 211-218 (CSKCKGEG).

The protein belongs to the DnaJ family. As to quaternary structure, homodimer. It depends on Zn(2+) as a cofactor.

The protein localises to the cytoplasm. In terms of biological role, participates actively in the response to hyperosmotic and heat shock by preventing the aggregation of stress-denatured proteins and by disaggregating proteins, also in an autonomous, DnaK-independent fashion. Unfolded proteins bind initially to DnaJ; upon interaction with the DnaJ-bound protein, DnaK hydrolyzes its bound ATP, resulting in the formation of a stable complex. GrpE releases ADP from DnaK; ATP binding to DnaK triggers the release of the substrate protein, thus completing the reaction cycle. Several rounds of ATP-dependent interactions between DnaJ, DnaK and GrpE are required for fully efficient folding. Also involved, together with DnaK and GrpE, in the DNA replication of plasmids through activation of initiation proteins. The polypeptide is Chaperone protein DnaJ (Porphyromonas gingivalis (strain ATCC BAA-308 / W83)).